The following is a 337-amino-acid chain: Formamidase (337 aa).

The 244-residue stretch at 14–257 (VVIGLVQLQL…DEIITAEVRP (244 aa)) folds into the CN hydrolase domain. Glutamate 60 serves as the catalytic Proton acceptor. The Proton donor role is filled by lysine 129. The active-site Nucleophile is cysteine 162.

It belongs to the carbon-nitrogen hydrolase superfamily. Aliphatic amidase family.

It catalyses the reaction formamide + H2O = formate + NH4(+). Is an aliphatic amidase with a restricted substrate specificity, as it only hydrolyzes formamide. This is Formamidase from Bradyrhizobium diazoefficiens (strain JCM 10833 / BCRC 13528 / IAM 13628 / NBRC 14792 / USDA 110).